A 423-amino-acid chain; its full sequence is Histidine--tRNA ligase (423 aa).

This sequence belongs to the class-II aminoacyl-tRNA synthetase family. Homodimer.

It localises to the cytoplasm. The catalysed reaction is tRNA(His) + L-histidine + ATP = L-histidyl-tRNA(His) + AMP + diphosphate + H(+). The chain is Histidine--tRNA ligase from Bacillus cytotoxicus (strain DSM 22905 / CIP 110041 / 391-98 / NVH 391-98).